The following is a 325-amino-acid chain: Lipoyl synthase (325 aa).

Residues Cys72, Cys77, Cys83, Cys98, Cys102, Cys105, and Ser312 each coordinate [4Fe-4S] cluster. One can recognise a Radical SAM core domain in the interval 84 to 301; sequence FSSGTATFMI…AEEGMKMGFK (218 aa).

The protein belongs to the radical SAM superfamily. Lipoyl synthase family. It depends on [4Fe-4S] cluster as a cofactor.

Its subcellular location is the cytoplasm. It carries out the reaction [[Fe-S] cluster scaffold protein carrying a second [4Fe-4S](2+) cluster] + N(6)-octanoyl-L-lysyl-[protein] + 2 oxidized [2Fe-2S]-[ferredoxin] + 2 S-adenosyl-L-methionine + 4 H(+) = [[Fe-S] cluster scaffold protein] + N(6)-[(R)-dihydrolipoyl]-L-lysyl-[protein] + 4 Fe(3+) + 2 hydrogen sulfide + 2 5'-deoxyadenosine + 2 L-methionine + 2 reduced [2Fe-2S]-[ferredoxin]. Its pathway is protein modification; protein lipoylation via endogenous pathway; protein N(6)-(lipoyl)lysine from octanoyl-[acyl-carrier-protein]: step 2/2. Its function is as follows. Catalyzes the radical-mediated insertion of two sulfur atoms into the C-6 and C-8 positions of the octanoyl moiety bound to the lipoyl domains of lipoate-dependent enzymes, thereby converting the octanoylated domains into lipoylated derivatives. This Stutzerimonas stutzeri (strain A1501) (Pseudomonas stutzeri) protein is Lipoyl synthase.